We begin with the raw amino-acid sequence, 838 residues long: Kinesin-like protein KIFC2 (838 aa).

Over residues Ala-23–Ala-32 the composition is skewed to low complexity. Disordered stretches follow at residues Ala-23–Ala-48 and Leu-140–Pro-185. Positions Asp-156 to His-167 are enriched in polar residues. Residues Leu-186–Arg-351 adopt a coiled-coil conformation. In terms of domain architecture, Kinesin motor spans Asn-409–Ile-740. Gly-484–Thr-491 contributes to the ATP binding site. A disordered region spans residues Arg-718 to Arg-792.

It belongs to the TRAFAC class myosin-kinesin ATPase superfamily. Kinesin family.

The protein localises to the cytoplasm. The protein resides in the cytoskeleton. May play a role in microtubule-dependent retrograde axonal transport. May function as the motor for the transport of multivesicular body (MVB)-like organelles in dendrites. In Homo sapiens (Human), this protein is Kinesin-like protein KIFC2 (KIFC2).